The primary structure comprises 118 residues: Ribonuclease P protein component (118 aa).

This sequence belongs to the RnpA family. Consists of a catalytic RNA component (M1 or rnpB) and a protein subunit.

The enzyme catalyses Endonucleolytic cleavage of RNA, removing 5'-extranucleotides from tRNA precursor.. RNaseP catalyzes the removal of the 5'-leader sequence from pre-tRNA to produce the mature 5'-terminus. It can also cleave other RNA substrates such as 4.5S RNA. The protein component plays an auxiliary but essential role in vivo by binding to the 5'-leader sequence and broadening the substrate specificity of the ribozyme. This chain is Ribonuclease P protein component, found in Petrotoga mobilis (strain DSM 10674 / SJ95).